The sequence spans 243 residues: MSFTLLPAVDVADGQAVRLVQGAAGTETSYGDPLEAALAWQRAGAEWVHLVDLDAAFGRGSNRELLADVVAKLDVRVELSGGIRDDASLEAALATGCERVNLGTAALENPEWADRVVAEYGDRVAVGLDVRITEQGHRLAARGWTTDGGDLWEVLARLDAAGCRRYVVTDVSKDGTLQGPNVALLREVCSRTDAPVIASGGVSSVDDLVELSRLAGDGLEGSIVGKALYAGNFTLEEALAAVR.

Catalysis depends on Asp10, which acts as the Proton acceptor. Residue Asp129 is the Proton donor of the active site.

The protein belongs to the HisA/HisF family.

It is found in the cytoplasm. It catalyses the reaction 1-(5-phospho-beta-D-ribosyl)-5-[(5-phospho-beta-D-ribosylamino)methylideneamino]imidazole-4-carboxamide = 5-[(5-phospho-1-deoxy-D-ribulos-1-ylimino)methylamino]-1-(5-phospho-beta-D-ribosyl)imidazole-4-carboxamide. It participates in amino-acid biosynthesis; L-histidine biosynthesis; L-histidine from 5-phospho-alpha-D-ribose 1-diphosphate: step 4/9. This chain is 1-(5-phosphoribosyl)-5-[(5-phosphoribosylamino)methylideneamino] imidazole-4-carboxamide isomerase, found in Saccharopolyspora erythraea (strain ATCC 11635 / DSM 40517 / JCM 4748 / NBRC 13426 / NCIMB 8594 / NRRL 2338).